The chain runs to 908 residues: Glutamate receptor ionotropic, kainate 2 (908 aa).

Positions 1–31 (MKIIFPILSNPVFRRTVKLLLCLLWIGYSQG) are cleaved as a signal peptide. Residues 32–561 (TTHVLRFGGI…VFSFLNPLSP (530 aa)) are Extracellular-facing. N-linked (GlcNAc...) asparagine glycosylation is found at Asn67, Asn73, Asn275, Asn378, Asn412, Asn423, and Asn430. Cysteines 96 and 347 form a disulfide. Residues Pro516, Ala518, and Arg523 each coordinate L-glutamate. A glycan (N-linked (GlcNAc...) asparagine) is linked at Asn546. The chain crosses the membrane as a helical span at residues 562–582 (DIWMYILLAYLGVSCVLFVIA). At 583 to 635 (RFSPYEWYNPHPCNPDSDVVENNFTLLNSFWFGVGALMQQGSELMPKALSTRI) the chain is on the cytoplasmic side. A helical membrane pass occupies residues 636 to 656 (VGGIWWFFTLIIISSYTANLA). Residues 657–819 (AFLTVERMES…KEASALGVQN (163 aa)) are Extracellular-facing. L-glutamate is bound by residues Ala689, Thr690, and Glu738. Cysteines 750 and 804 form a disulfide. A glycan (N-linked (GlcNAc...) asparagine) is linked at Asn751. Residues 820–840 (IGGIFIVLAAGLVLSVFVAVG) traverse the membrane as a helical segment. Over 841-908 (EFLYKSKKNA…RRLPGKETMA (68 aa)) the chain is Cytoplasmic. Ser846 and Ser868 each carry phosphoserine; by PKC. Residue Lys886 forms a Glycyl lysine isopeptide (Lys-Gly) (interchain with G-Cter in SUMO1) linkage.

It belongs to the glutamate-gated ion channel (TC 1.A.10.1) family. GRIK2 subfamily. As to quaternary structure, homotetramer and heterotetramer with GRIK5. Tetramers may be formed by the dimerization of dimers. Assembles into a kainate-gated homomeric channel that does not bind AMPA. Can form functional heteromeric receptors with GRIK5. Can form functional heteromeric receptors with GRIK3 and GRIK4. Interacts with DLG4. Interacts with NETO2. Interacts (via C-terminus) with KLHL17 (via kelch repeats); the interaction targets GRIK2 for degradation via ubiquitin-proteasome pathway. Sumoylation mediates kainate receptor-mediated endocytosis and regulates synaptic transmission. Sumoylation is enhanced by PIAS3 and desumoylated by SENP1. Post-translationally, ubiquitinated. Ubiquitination regulates the GRIK2 levels at the synapse by leading kainate receptor degradation through proteasome. In terms of processing, phosphorylated by PKC at Ser-868 upon agonist activation, this directly enhance sumoylation. Expression is higher in cerebellum than in cerebral cortex.

The protein resides in the cell membrane. The protein localises to the postsynaptic cell membrane. The catalysed reaction is Ca(2+)(in) = Ca(2+)(out). The enzyme catalyses Na(+)(in) = Na(+)(out). Its activity is regulated as follows. Cold receptor activity activated by temperatures between 10-19 degrees Celsius. Its function is as follows. Ionotropic glutamate receptor that functions as a cation permeable ligand-gated ion channel, gated by L-glutamate and the glutamatergic agonist kainic acid. L-glutamate acts as an excitatory neurotransmitter at many synapses in the central nervous system. Binding of the excitatory neurotransmitter L-glutamate induces a conformation change, leading to the opening of the cation channel, and thereby converts the chemical signal to an electrical impulse. The receptor then desensitizes rapidly and enters a transient inactive state, characterized by the presence of bound agonist. Modulates cell surface expression of NETO2. In association with GRIK3, involved in presynaptic facilitation of glutamate release at hippocampal mossy fiber synapses. In terms of biological role, independent of its ionotropic glutamate receptor activity, acts as a thermoreceptor conferring sensitivity to cold temperatures. Functions in dorsal root ganglion neurons. This chain is Glutamate receptor ionotropic, kainate 2 (GRIK2), found in Homo sapiens (Human).